The chain runs to 457 residues: Acetylcholine receptor subunit alpha (457 aa).

The signal sequence occupies residues 1-20 (MELSTVLLLLGLCSAGLVLG). Topologically, residues 21–230 (SEHETRLVAK…ITYHFVMQRL (210 aa)) are extracellular. 2 disulfides stabilise this stretch: C148/C162 and C212/C213. N161 is a glycosylation site (N-linked (GlcNAc...) asparagine). Transmembrane regions (helical) follow at residues 231-255 (PLYFIVNVIIPCLLFSFLTSLVFYL), 263-281 (MTLSISVLLSLTVFLLVIV), and 297-316 (YMLFTMVFVIASIIITVIVI). The Cytoplasmic segment spans residues 317–428 (NTHHRSPSTH…WKYVAMVMDH (112 aa)). The helical transmembrane segment at 429–447 (ILLGVFMLVCLIGTLAVFA) threads the bilayer.

The protein belongs to the ligand-gated ion channel (TC 1.A.9) family. Acetylcholine receptor (TC 1.A.9.1) subfamily. Alpha-1/CHRNA1 sub-subfamily. In terms of assembly, one of the alpha chains that assemble within the acetylcholine receptor, a pentamer of two alpha chains, a beta, a delta, and a gamma (in immature muscle) or epsilon (in mature muscle) chains. The muscle heteropentamer composed of alpha-1, beta-1, delta, epsilon subunits interacts with the alpha-conotoxin ImII.

The protein resides in the postsynaptic cell membrane. It is found in the cell membrane. It catalyses the reaction K(+)(in) = K(+)(out). The catalysed reaction is Na(+)(in) = Na(+)(out). Functionally, upon acetylcholine binding, the AChR responds by an extensive change in conformation that affects all subunits and leads to opening of an ion-conducting channel across the plasma membrane. The polypeptide is Acetylcholine receptor subunit alpha (Chrna1) (Mus musculus (Mouse)).